Here is a 369-residue protein sequence, read N- to C-terminus: UDP-N-acetylglucosamine--N-acetylmuramyl-(pentapeptide) pyrophosphoryl-undecaprenol N-acetylglucosamine transferase (369 aa).

Residues 16–18 (TGG), asparagine 130, arginine 171, serine 196, and glutamine 297 contribute to the UDP-N-acetyl-alpha-D-glucosamine site.

The protein belongs to the glycosyltransferase 28 family. MurG subfamily.

It is found in the cell inner membrane. It catalyses the reaction di-trans,octa-cis-undecaprenyl diphospho-N-acetyl-alpha-D-muramoyl-L-alanyl-D-glutamyl-meso-2,6-diaminopimeloyl-D-alanyl-D-alanine + UDP-N-acetyl-alpha-D-glucosamine = di-trans,octa-cis-undecaprenyl diphospho-[N-acetyl-alpha-D-glucosaminyl-(1-&gt;4)]-N-acetyl-alpha-D-muramoyl-L-alanyl-D-glutamyl-meso-2,6-diaminopimeloyl-D-alanyl-D-alanine + UDP + H(+). The protein operates within cell wall biogenesis; peptidoglycan biosynthesis. In terms of biological role, cell wall formation. Catalyzes the transfer of a GlcNAc subunit on undecaprenyl-pyrophosphoryl-MurNAc-pentapeptide (lipid intermediate I) to form undecaprenyl-pyrophosphoryl-MurNAc-(pentapeptide)GlcNAc (lipid intermediate II). This chain is UDP-N-acetylglucosamine--N-acetylmuramyl-(pentapeptide) pyrophosphoryl-undecaprenol N-acetylglucosamine transferase, found in Desulfotalea psychrophila (strain LSv54 / DSM 12343).